Consider the following 1100-residue polypeptide: Beta-alanine-activating enzyme (1100 aa).

The disordered stretch occupies residues 162–181; sequence HKVTDREDRVSAESRTPEKE. ATP contacts are provided by residues 197–205, Asp-427, Arg-441, and Lys-526; that span reads TSGTTGTPK. Positions 552 to 632 constitute a Carrier domain; it reads EELWGKLQYL…DVYNHIVQAV (81 aa). O-(pantetheine 4'-phosphoryl)serine is present on Ser-591. The interval 643–671 is disordered; sequence SYTTKRKFSDADPEEASGKPARLESAWPS. A Phosphoserine modification is found at Ser-651.

It belongs to the ATP-dependent AMP-binding enzyme family.

In terms of biological role, covalently binds beta-alanine in an ATP-dependent manner to form a thioester bond with its phosphopantetheine group and transfers it to an as yet unknown acceptor via an amide bond. May be required for a post-translational protein modification or for post-transcriptional modification of an RNA. The sequence is that of Beta-alanine-activating enzyme (Aasdh) from Mus musculus (Mouse).